A 195-amino-acid chain; its full sequence is MVKEIILASKSGVRKKILEENNIQFRVEPSNVDEDSVKESLLKEKVTPTIISKNLAELKANKISQKFTEEIVLGADSVIDLEGKIISKPNDREEALEILKRMNGKTHQLISSVCISRGGSMIWNYTDKASLTMKNMTFLELENYLKKISDKDLYAYNVYQIEGEGRNLFSKIEGDEDTIMGLPVKKIKEYLKIIK.

The active-site Proton acceptor is the Asp76.

This sequence belongs to the Maf family. Requires a divalent metal cation as cofactor.

It localises to the cytoplasm. The enzyme catalyses a ribonucleoside 5'-triphosphate + H2O = a ribonucleoside 5'-phosphate + diphosphate + H(+). The catalysed reaction is a 2'-deoxyribonucleoside 5'-triphosphate + H2O = a 2'-deoxyribonucleoside 5'-phosphate + diphosphate + H(+). Functionally, nucleoside triphosphate pyrophosphatase. May have a dual role in cell division arrest and in preventing the incorporation of modified nucleotides into cellular nucleic acids. This chain is Nucleoside triphosphate pyrophosphatase, found in Pelagibacter ubique (strain HTCC1062).